Here is a 243-residue protein sequence, read N- to C-terminus: tRNA pseudouridine synthase A (243 aa).

The Nucleophile role is filled by Asp-54. Residue Tyr-112 coordinates substrate.

Belongs to the tRNA pseudouridine synthase TruA family. Homodimer.

The catalysed reaction is uridine(38/39/40) in tRNA = pseudouridine(38/39/40) in tRNA. Functionally, formation of pseudouridine at positions 38, 39 and 40 in the anticodon stem and loop of transfer RNAs. The polypeptide is tRNA pseudouridine synthase A (Aster yellows witches'-broom phytoplasma (strain AYWB)).